Here is a 199-residue protein sequence, read N- to C-terminus: Dephospho-CoA kinase (199 aa).

Residues 3–199 (VIGLTGSIGM…AAAKMPRRRS (197 aa)) form the DPCK domain. 11–16 (GMGKST) is an ATP binding site.

Belongs to the CoaE family.

The protein resides in the cytoplasm. The enzyme catalyses 3'-dephospho-CoA + ATP = ADP + CoA + H(+). It functions in the pathway cofactor biosynthesis; coenzyme A biosynthesis; CoA from (R)-pantothenate: step 5/5. Functionally, catalyzes the phosphorylation of the 3'-hydroxyl group of dephosphocoenzyme A to form coenzyme A. In Nitrobacter winogradskyi (strain ATCC 25391 / DSM 10237 / CIP 104748 / NCIMB 11846 / Nb-255), this protein is Dephospho-CoA kinase.